Here is a 283-residue protein sequence, read N- to C-terminus: MQFLIVTGMSGAGKSVALNFFEDMGFFCIDNLPPALISKFAELCLHSELDKIAVVSDIRGREFFNALFSELSSLEKRGIDYEILFLEASDEVLIRRYKETRRRHPLDEEGRVLDAIRKERHLLEEIKGKANKIIDTSKLSKQELNHELKKVYSSYFIGKQSMSVTIISFGYKYGIPMDADLVFDVRFLPNPYYVRSLKERTGEETVVQDYILKWPVTQKFYKRFFDMMDFLLPEYSREGKSHFTIAIGCTGGKHRSVTTAIKLKEFLLSKGYHVVVEHKDISK.

8 to 15 is a binding site for ATP; sequence GMSGAGKS. Residue 57-60 participates in GTP binding; sequence DIRG.

The protein belongs to the RapZ-like family.

Functionally, displays ATPase and GTPase activities. This chain is Nucleotide-binding protein Hore_15880, found in Halothermothrix orenii (strain H 168 / OCM 544 / DSM 9562).